We begin with the raw amino-acid sequence, 357 residues long: DNA replication and repair protein RecF (357 aa).

An ATP-binding site is contributed by 30-37 (GANGSGKT).

Belongs to the RecF family.

It is found in the cytoplasm. Functionally, the RecF protein is involved in DNA metabolism; it is required for DNA replication and normal SOS inducibility. RecF binds preferentially to single-stranded, linear DNA. It also seems to bind ATP. The chain is DNA replication and repair protein RecF from Cronobacter sakazakii (strain ATCC BAA-894) (Enterobacter sakazakii).